The primary structure comprises 48 residues: Small, acid-soluble spore protein P (48 aa).

A compositionally biased stretch (basic and acidic residues) spans 1-12; the sequence is MTNKNTSKDMHK. The segment at 1-48 is disordered; it reads MTNKNTSKDMHKNAPKGHNPGQPEPLSGSKKVKNRNHTRQKHNTSHDM. The span at 30–48 shows a compositional bias: basic residues; the sequence is KKVKNRNHTRQKHNTSHDM.

It belongs to the SspP family.

Its subcellular location is the spore core. This is Small, acid-soluble spore protein P from Bacillus velezensis (strain DSM 23117 / BGSC 10A6 / LMG 26770 / FZB42) (Bacillus amyloliquefaciens subsp. plantarum).